The sequence spans 635 residues: Early transcription factor 70 kDa subunit (635 aa).

The region spanning Arg32 to Glu185 is the Helicase ATP-binding domain. An ATP-binding site is contributed by His45–Thr52. The DEXH box motif lies at Asp135–His138. In terms of domain architecture, Helicase C-terminal spans Lys326–Leu505.

Belongs to the helicase family. VETF subfamily. In terms of assembly, heterodimer of a 70 kDa and a 82 kDa subunit. Part of the early transcription complex composed of ETF, RAP94, and the DNA-directed RNA polymerase.

The protein resides in the virion. Functionally, acts with RNA polymerase to initiate transcription from early gene promoters. Is recruited by the RPO-associated protein of 94 kDa (RAP94) to form the early transcription complex, which also contains the core RNA polymerase. ETF heterodimer binds to early gene promoters. The sequence is that of Early transcription factor 70 kDa subunit (VETFS) from Oryctolagus cuniculus (Rabbit).